The sequence spans 348 residues: Neuronal growth regulator 1 (348 aa).

The signal sequence occupies residues 1-31 (MVLLAQGACCSNQWLAAVLLSLCSCLPAGQS). Ig-like C2-type domains are found at residues 32–128 (VDFP…VHLT), 133–215 (PKIY…RVVV), and 219–307 (PTIQ…LPLN). Cys54 and Cys112 are oxidised to a cystine. Residues Asn67 and Asn149 are each glycosylated (N-linked (GlcNAc...) asparagine). Disulfide bonds link Cys154–Cys197 and Cys239–Cys291. Tyr181 carries the phosphotyrosine modification. N-linked (GlcNAc...) asparagine glycosylation is found at Asn269, Asn280, Asn288, and Asn301. A lipid anchor (GPI-anchor amidated glycine) is attached at Gly318. Residues 319-348 (SACDLFSCWSLALTLSSVISIFYLKNAILQ) constitute a propeptide, removed in mature form.

This sequence belongs to the immunoglobulin superfamily. IgLON family. In terms of processing, glycosylated. Highly expressed in brain.

The protein resides in the cell membrane. In terms of biological role, may be involved in cell-adhesion. May function as a trans-neural growth-promoting factor in regenerative axon sprouting in the mammalian brain. The protein is Neuronal growth regulator 1 (Negr1) of Rattus norvegicus (Rat).